Reading from the N-terminus, the 797-residue chain is Speckle targeted PIP5K1A-regulated poly(A) polymerase (797 aa).

Residues 14–44 (FHCNLCHVNIPNRPSLEDHVKGKKHLHLLRL) form a Matrin-type zinc finger. The RRM domain maps to 54–126 (NSVFVSGFKA…LKLRVKPREK (73 aa)). Serine 205 is a binding site for ATP. Mg(2+) is bound by residues aspartate 216 and aspartate 218. Aspartate 216, aspartate 218, asparagine 319, arginine 341, tyrosine 363, and histidine 495 together coordinate UTP. Asparagine 319 contacts ATP. The PAP-associated domain occupies 421–495 (DLCTLLFGFF…NVLDPFELNH (75 aa)). A KA1; binds the bulging loops of U6 snRNA but is dispensable for terminal uridylyltransferase activity region spans residues 544–787 (QSEAAASSQP…FLPKMAETIM (244 aa)). A disordered region spans residues 611 to 659 (EETQSLDKTDKSGSEMEVNNNRSLEDTNIQVKGEAGKKRPLSVEEGPST). The span at 615–624 (SLDKTDKSGS) shows a compositional bias: basic and acidic residues. Residues 627–640 (EVNNNRSLEDTNIQ) are compositionally biased toward polar residues.

This sequence belongs to the DNA polymerase type-B-like family. Associates with the cleavage and polyadenylation specificity factor (CPSF) complex. Mg(2+) is required as a cofactor. Mn(2+) serves as cofactor.

The protein resides in the nucleus. It is found in the nucleolus. The protein localises to the nucleus speckle. The enzyme catalyses RNA(n) + UTP = RNA(n)-3'-uridine ribonucleotide + diphosphate. It catalyses the reaction RNA(n) + ATP = RNA(n)-3'-adenine ribonucleotide + diphosphate. Functionally, poly(A) polymerase that creates the 3'-poly(A) tail of specific pre-mRNAs. In addition to polyadenylation, it is also required for the 3'-end cleavage of pre-mRNAs: binds to the 3'UTR of targeted pre-mRNAs and promotes the recruitment and assembly of the CPSF complex on the 3'UTR of pre-mRNAs. In addition to adenylyltransferase activity, also has uridylyltransferase activity. However, the ATP ratio is higher than UTP in cells, suggesting that it functions primarily as a poly(A) polymerase. This Danio rerio (Zebrafish) protein is Speckle targeted PIP5K1A-regulated poly(A) polymerase (tut1).